The sequence spans 1663 residues: Cortactin-binding protein 2 (1663 aa).

5 disordered regions span residues M1–A23, K203–E222, Q359–G440, G454–S478, and R498–I617. Residues K119–K276 adopt a coiled-coil conformation. Residues P386–S396 show a composition bias toward low complexity. At R498 the chain carries Asymmetric dimethylarginine. Residues T583–Q593 show a composition bias toward polar residues. ANK repeat units lie at residues G709 to Y739, D743 to A772, N776 to H805, G809 to V838, D842 to G871, and E912 to R942. The interval N1446–K1485 is disordered. S1524 carries the phosphoserine modification. A disordered region spans residues S1580–K1663. Residues K1582–K1599 show a composition bias toward polar residues. Low complexity predominate over residues S1624–Q1638. Basic and acidic residues predominate over residues S1645 to K1663.

Interacts with CTTN/cortactin SH3 domain. Interacts with STRN, STRN4/zinedin and MOB4/phocein; this interactions mediate the association with the STRIPAK core complex and may regulate dendritic spine distribution of the STRIPAK complex in hippocampal neurons. Activation of glutamate receptors weakens the interaction with STRN and STRN4.

It localises to the cytoplasm. The protein resides in the cell cortex. Its subcellular location is the cell projection. The protein localises to the dendritic spine. Its function is as follows. Regulates the dendritic spine distribution of CTTN/cortactin in hippocampal neurons, and thus controls dendritic spinogenesis and dendritic spine maintenance. Associates with the striatin-interacting phosphatase and kinase (STRIPAK) core complex to regulate dendritic spine distribution of the STRIPAK complex in hippocampal neurons. The sequence is that of Cortactin-binding protein 2 (CTTNBP2) from Pongo abelii (Sumatran orangutan).